We begin with the raw amino-acid sequence, 486 residues long: Cardiolipin synthase A (486 aa).

A run of 2 helical transmembrane segments spans residues 3–23 (TFYT…IAGV) and 38–58 (MAWL…YLSV). PLD phosphodiesterase domains follow at residues 219 to 246 (MDLR…VDPR) and 399 to 426 (EGGL…DMRS). Active-site residues include His224, Lys226, Asp231, His404, Lys406, and Asp411.

The protein belongs to the phospholipase D family. Cardiolipin synthase subfamily. ClsA sub-subfamily.

The protein localises to the cell inner membrane. It catalyses the reaction 2 a 1,2-diacyl-sn-glycero-3-phospho-(1'-sn-glycerol) = a cardiolipin + glycerol. Its function is as follows. Catalyzes the reversible phosphatidyl group transfer from one phosphatidylglycerol molecule to another to form cardiolipin (CL) (diphosphatidylglycerol) and glycerol. The sequence is that of Cardiolipin synthase A from Salmonella arizonae (strain ATCC BAA-731 / CDC346-86 / RSK2980).